We begin with the raw amino-acid sequence, 201 residues long: Holliday junction branch migration complex subunit RuvA (201 aa).

The domain I stretch occupies residues 1–63 (MIEYIKGEIA…EDAYVLYGFA (63 aa)). Positions 64–142 (DKQERELFLL…TGAMAATAVG (79 aa)) are domain II. Residues 143-153 (GAAGALLPAMN) are flexible linker. A domain III region spans residues 153 to 201 (NAEVQEEAIAALTMLGFAAAPSQKAVLAILKEEPDAPVEKVIKLALKRL).

This sequence belongs to the RuvA family. As to quaternary structure, homotetramer. Forms an RuvA(8)-RuvB(12)-Holliday junction (HJ) complex. HJ DNA is sandwiched between 2 RuvA tetramers; dsDNA enters through RuvA and exits via RuvB. An RuvB hexamer assembles on each DNA strand where it exits the tetramer. Each RuvB hexamer is contacted by two RuvA subunits (via domain III) on 2 adjacent RuvB subunits; this complex drives branch migration. In the full resolvosome a probable DNA-RuvA(4)-RuvB(12)-RuvC(2) complex forms which resolves the HJ.

It localises to the cytoplasm. Functionally, the RuvA-RuvB-RuvC complex processes Holliday junction (HJ) DNA during genetic recombination and DNA repair, while the RuvA-RuvB complex plays an important role in the rescue of blocked DNA replication forks via replication fork reversal (RFR). RuvA specifically binds to HJ cruciform DNA, conferring on it an open structure. The RuvB hexamer acts as an ATP-dependent pump, pulling dsDNA into and through the RuvAB complex. HJ branch migration allows RuvC to scan DNA until it finds its consensus sequence, where it cleaves and resolves the cruciform DNA. The chain is Holliday junction branch migration complex subunit RuvA from Bacteroides fragilis (strain ATCC 25285 / DSM 2151 / CCUG 4856 / JCM 11019 / LMG 10263 / NCTC 9343 / Onslow / VPI 2553 / EN-2).